Reading from the N-terminus, the 273-residue chain is Formamidopyrimidine-DNA glycosylase (273 aa).

P2 acts as the Schiff-base intermediate with DNA in catalysis. E3 serves as the catalytic Proton donor. K60 (proton donor; for beta-elimination activity) is an active-site residue. 3 residues coordinate DNA: H94, R113, and K154. The segment at 239–273 (EAYGRTGEPCRRCGTPIERIVVAQRSTHICPVCQA) adopts an FPG-type zinc-finger fold. R263 (proton donor; for delta-elimination activity) is an active-site residue.

The protein belongs to the FPG family. In terms of assembly, monomer. Zn(2+) is required as a cofactor.

The catalysed reaction is Hydrolysis of DNA containing ring-opened 7-methylguanine residues, releasing 2,6-diamino-4-hydroxy-5-(N-methyl)formamidopyrimidine.. It carries out the reaction 2'-deoxyribonucleotide-(2'-deoxyribose 5'-phosphate)-2'-deoxyribonucleotide-DNA = a 3'-end 2'-deoxyribonucleotide-(2,3-dehydro-2,3-deoxyribose 5'-phosphate)-DNA + a 5'-end 5'-phospho-2'-deoxyribonucleoside-DNA + H(+). Its function is as follows. Involved in base excision repair of DNA damaged by oxidation or by mutagenic agents. Acts as a DNA glycosylase that recognizes and removes damaged bases. Has a preference for oxidized purines, such as 7,8-dihydro-8-oxoguanine (8-oxoG). Has AP (apurinic/apyrimidinic) lyase activity and introduces nicks in the DNA strand. Cleaves the DNA backbone by beta-delta elimination to generate a single-strand break at the site of the removed base with both 3'- and 5'-phosphates. The polypeptide is Formamidopyrimidine-DNA glycosylase (Herpetosiphon aurantiacus (strain ATCC 23779 / DSM 785 / 114-95)).